Consider the following 349-residue polypeptide: Protein RecA (349 aa).

65 to 72 (GPESSGKT) lines the ATP pocket.

This sequence belongs to the RecA family.

Its subcellular location is the cytoplasm. Its function is as follows. Can catalyze the hydrolysis of ATP in the presence of single-stranded DNA, the ATP-dependent uptake of single-stranded DNA by duplex DNA, and the ATP-dependent hybridization of homologous single-stranded DNAs. It interacts with LexA causing its activation and leading to its autocatalytic cleavage. This is Protein RecA from Enterococcus faecium (Streptococcus faecium).